Reading from the N-terminus, the 252-residue chain is Small ribosomal subunit protein uS3 (252 aa).

One can recognise a KH type-2 domain in the interval 39–109; sequence IRNYVNTRLK…EVKIDVVEVV (71 aa). The span at 222 to 240 shows a compositional bias: basic and acidic residues; sequence MKKIRDRRNDQRSRGGRDS. Positions 222–252 are disordered; that stretch reads MKKIRDRRNDQRSRGGRDSRNKRRRRPKNTA. Residues 241 to 252 show a composition bias toward basic residues; the sequence is RNKRRRRPKNTA.

This sequence belongs to the universal ribosomal protein uS3 family. As to quaternary structure, part of the 30S ribosomal subunit. Forms a tight complex with proteins S10 and S14.

In terms of biological role, binds the lower part of the 30S subunit head. Binds mRNA in the 70S ribosome, positioning it for translation. The protein is Small ribosomal subunit protein uS3 of Chlorobium phaeobacteroides (strain BS1).